The chain runs to 261 residues: Glucosamine-6-phosphate deaminase (261 aa).

The active-site Proton acceptor; for enolization step is the D67. Residue D136 is the For ring-opening step of the active site. The active-site Proton acceptor; for ring-opening step is the H138. The active-site For ring-opening step is the E143.

It belongs to the glucosamine/galactosamine-6-phosphate isomerase family. NagB subfamily.

It catalyses the reaction alpha-D-glucosamine 6-phosphate + H2O = beta-D-fructose 6-phosphate + NH4(+). It functions in the pathway amino-sugar metabolism; N-acetylneuraminate degradation; D-fructose 6-phosphate from N-acetylneuraminate: step 5/5. In terms of biological role, catalyzes the reversible isomerization-deamination of glucosamine 6-phosphate (GlcN6P) to form fructose 6-phosphate (Fru6P) and ammonium ion. This Beutenbergia cavernae (strain ATCC BAA-8 / DSM 12333 / CCUG 43141 / JCM 11478 / NBRC 16432 / NCIMB 13614 / HKI 0122) protein is Glucosamine-6-phosphate deaminase.